A 232-amino-acid chain; its full sequence is Ubiquinone biosynthesis O-methyltransferase (232 aa).

S-adenosyl-L-methionine is bound by residues arginine 36, glycine 55, aspartate 76, and methionine 120.

The protein belongs to the methyltransferase superfamily. UbiG/COQ3 family.

The enzyme catalyses a 3-demethylubiquinol + S-adenosyl-L-methionine = a ubiquinol + S-adenosyl-L-homocysteine + H(+). The catalysed reaction is a 3-(all-trans-polyprenyl)benzene-1,2-diol + S-adenosyl-L-methionine = a 2-methoxy-6-(all-trans-polyprenyl)phenol + S-adenosyl-L-homocysteine + H(+). The protein operates within cofactor biosynthesis; ubiquinone biosynthesis. In terms of biological role, O-methyltransferase that catalyzes the 2 O-methylation steps in the ubiquinone biosynthetic pathway. The chain is Ubiquinone biosynthesis O-methyltransferase from Paraburkholderia phymatum (strain DSM 17167 / CIP 108236 / LMG 21445 / STM815) (Burkholderia phymatum).